Reading from the N-terminus, the 1185-residue chain is Adhesion G-protein coupled receptor G6 (1185 aa).

Residues 1–32 form the signal peptide; the sequence is MISFISGRWWRWKFQNTLAVFLLLICLSTSVA. Residues 33 to 849 are Extracellular-facing; the sequence is QSCQSSTSCN…AELIDEKNNR (817 aa). A disulfide bond links C41 and C67. The region spanning 41–149 is the CUB domain; sequence CNVVLTDSQG…KGFHISYKQV (109 aa). The tract at residues 41–354 is mediates interaction with type IV collagen; that stretch reads CNVVLTDSQG…SSTQTDSTLS (314 aa). The segment at 41–839 is inhibits receptor signaling in absence of type IV collagen; sequence CNVVLTDSQG…FGILMDVSRA (799 aa). An N-linked (GlcNAc...) asparagine glycan is attached at N68. Ca(2+)-binding residues include E89 and D97. C94 and C111 are disulfide-bonded. The N-linked (GlcNAc...) asparagine glycan is linked to N121. The Ca(2+) site is built by D134, S136, and V137. In terms of domain architecture, Pentraxin (PTX) spans 154 to 355; that stretch reads RNQKVTMPKS…STQTDSTLSC (202 aa). 3 cysteine pairs are disulfide-bonded: C185/C248, C229/C271, and C369/C375. N395, N429, N470, N539, N550, N562, N565, N613, N680, N691, N719, N763, N799, and N818 each carry an N-linked (GlcNAc...) asparagine glycan. Cystine bridges form between C508–C544 and C532–C563. A GAIN-B domain is found at 658–840; that stretch reads PSLTISSKNL…GILMDVSRAA (183 aa). Cystine bridges form between C790–C822 and C809–C824. Residues 790–840 are GPS; the sequence is CVFWDFNLQNYSGGCNSDGCKVGSDSNSNRTVCLCNHLTHFGILMDVSRAA. The interval 829–837 is stachel; sequence HFGILMDVS. A helical transmembrane segment spans residues 850–870; that stretch reads VLTFITYIGCGISAIFSAATL. Residues 871–886 lie on the Cytoplasmic side of the membrane; sequence LTYIAFEKLRRDYPSK. A helical transmembrane segment spans residues 887–907; the sequence is ILMNLSTSLLFLNMVFLLDGW. Over 908–915 the chain is Extracellular; it reads LASYEIKE. The helical transmembrane segment at 916–936 threads the bilayer; it reads LCVTVAVFLHFFLLTSFTWMG. At 937–957 the chain is on the cytoplasmic side; sequence LESIHMYIALVKVFNTYIRRY. Residues 958–978 form a helical membrane-spanning segment; it reads ILKFCIVGWGVPAAIVGIVLA. At 979 to 1013 the chain is on the extracellular side; that stretch reads VSKDSYGKNYYGKGKDGQGTSEFCWILNPVVFYVT. The chain crosses the membrane as a helical span at residues 1014–1034; that stretch reads CVAYFSIIFLMNVAMFIVVMI. At 1035–1057 the chain is on the cytoplasmic side; that stretch reads QICGRNGKRSNRTLREDILRNLR. Residues 1058–1080 form a helical membrane-spanning segment; that stretch reads SVVSLTFLLGMTWGFAFFAWGPV. Over 1081–1083 the chain is Extracellular; that stretch reads SLA. The helical transmembrane segment at 1084–1106 threads the bilayer; sequence FMYLFTIFNSLQGLFIFVFHCAL. A 17alpha-hydroxyprogesterone-binding site is contributed by N1092. The Cytoplasmic segment spans residues 1107–1185; that stretch reads KENVQKQWRR…RHSNADSTLQ (79 aa). A disordered region spans residues 1138–1160; the sequence is NTKKVSSDNLGKSLSSSSFGSTT. The segment covering 1144–1158 has biased composition (low complexity); it reads SDNLGKSLSSSSFGS.

The protein belongs to the G-protein coupled receptor 2 family. Adhesion G-protein coupled receptor (ADGR) subfamily. Post-translationally, autoproteolytically processed at the GPS region of the GAIN-B domain; this cleavage modulates receptor activity. Expressed in Schwann cells of the posterior lateral line nerve and in brain.

The protein localises to the cell membrane. Forms a heterodimer of 2 chains generated by proteolytic processing that remain associated through non-covalent interactions mediated by the GAIN-B domain. In the inactivated receptor, the Stachel sequence (also named stalk) is embedded in the GAIN-B domain, where it adopts a beta-strand conformation. On activation, the Stachel moves into the 7 transmembrane region and adopts a twisted hook-shaped configuration that forms contacts within the receptor, leading to coupling of a G-alpha protein, which activates signaling. The cleaved GAIN-B and N-terminal domains can then dissociate from the rest of the receptor. In terms of biological role, adhesion G-protein coupled receptor (aGPCR) for steroid hormones, such as progesterone and 17alpha-hydroxyprogesterone (17OHP). Ligand binding causes a conformation change that triggers signaling via guanine nucleotide-binding proteins (G proteins) and modulates the activity of downstream effectors, such as adenylate cyclase. Adgrg6 is coupled to G(i) G alpha proteins and mediates inhibition of adenylate cyclase. Also able to couple to G(q) G proteins. Involved in myelination of the peripheral nervous system: required for differentiation of promyelinating Schwann cells and for normal myelination of axons. G-protein coupled receptor activity can also be activated by type IV collagen, a major constituent of the basement membrane. Also plays a role inner ear development. This is Adhesion G-protein coupled receptor G6 (adgrg6) from Danio rerio (Zebrafish).